The sequence spans 242 residues: 1-(5-phosphoribosyl)-5-[(5-phosphoribosylamino)methylideneamino] imidazole-4-carboxamide isomerase (242 aa).

The active-site Proton acceptor is the Asp10. Residue Asp131 is the Proton donor of the active site.

The protein belongs to the HisA/HisF family.

Its subcellular location is the cytoplasm. It catalyses the reaction 1-(5-phospho-beta-D-ribosyl)-5-[(5-phospho-beta-D-ribosylamino)methylideneamino]imidazole-4-carboxamide = 5-[(5-phospho-1-deoxy-D-ribulos-1-ylimino)methylamino]-1-(5-phospho-beta-D-ribosyl)imidazole-4-carboxamide. It functions in the pathway amino-acid biosynthesis; L-histidine biosynthesis; L-histidine from 5-phospho-alpha-D-ribose 1-diphosphate: step 4/9. This is 1-(5-phosphoribosyl)-5-[(5-phosphoribosylamino)methylideneamino] imidazole-4-carboxamide isomerase from Granulibacter bethesdensis (strain ATCC BAA-1260 / CGDNIH1).